The sequence spans 45 residues: Globin, minor monomeric component (45 aa).

The Globin domain maps to 1–45 (GLSAAERQVVASCWKDIAGADXGAGVGKEXLIKFISAAPEMAAVF).

Belongs to the globin family. In terms of assembly, monomer.

This Glycera dibranchiata (Bloodworm) protein is Globin, minor monomeric component.